Reading from the N-terminus, the 93-residue chain is SH3 domain-binding glutamic acid-rich-like protein 3 (93 aa).

Ser2 is modified (N-acetylserine). Positions 2 to 93 constitute a Glutaredoxin domain; sequence SGLRVYSTSV…DTLQEFLKLA (92 aa). Thr9 carries O-linked (GalNAc...) threonine glycosylation.

This sequence belongs to the SH3BGR family. In terms of assembly, homodimer. Interacts with MYO1C (via its IQ motifs); the interaction is dependent on calcium and takes place at membrane ruffles. Post-translationally, may be glycosylated.

Its subcellular location is the cytoplasm. It is found in the cytosol. It localises to the cell projection. The protein localises to the ruffle membrane. The protein resides in the nucleus. In terms of biological role, could act as a modulator of glutaredoxin biological activity. May play a role in cytoskeleton organization. The protein is SH3 domain-binding glutamic acid-rich-like protein 3 (Sh3bgrl3) of Mus musculus (Mouse).